We begin with the raw amino-acid sequence, 238 residues long: NAD(P)H-hydrate epimerase (238 aa).

Positions 11–217 (AAALDKDLMS…EIHQKYNLQL (207 aa)) constitute a YjeF N-terminal domain. 61–65 (NNGGD) lines the (6S)-NADPHX pocket. K(+)-binding residues include asparagine 62 and aspartate 123. (6S)-NADPHX-binding positions include 127–133 (GFSFTGS) and aspartate 156. Residue serine 159 coordinates K(+).

This sequence belongs to the NnrE/AIBP family. The cofactor is K(+).

Its subcellular location is the cytoplasm. The protein localises to the mitochondrion. The enzyme catalyses (6R)-NADHX = (6S)-NADHX. It catalyses the reaction (6R)-NADPHX = (6S)-NADPHX. In terms of biological role, catalyzes the epimerization of the S- and R-forms of NAD(P)HX, a damaged form of NAD(P)H that is a result of enzymatic or heat-dependent hydration. This is a prerequisite for the S-specific NAD(P)H-hydrate dehydratase to allow the repair of both epimers of NAD(P)HX. The sequence is that of NAD(P)H-hydrate epimerase from Sclerotinia sclerotiorum (strain ATCC 18683 / 1980 / Ss-1) (White mold).